Reading from the N-terminus, the 125-residue chain is Probable mercury resistance operon repressor (125 aa).

Residues 15-109 (VPCTHPDTTA…LARCLAADNA (95 aa)) enclose the HTH arsR-type domain. A DNA-binding region (H-T-H motif) is located at residues 49-68 (SAECVEHAGISQPRVSVHLS). Hg(2+) is bound by residues Cys-69, Cys-73, and Cys-114.

In terms of biological role, negatively regulates the mercuric reductase merA and the organolyase merB in the absence of mercuric ions. The sequence is that of Probable mercury resistance operon repressor (merR) from Streptomyces lividans.